A 379-amino-acid chain; its full sequence is Cobalt-precorrin-5B C(1)-methyltransferase (379 aa).

This sequence belongs to the CbiD family.

The enzyme catalyses Co-precorrin-5B + S-adenosyl-L-methionine = Co-precorrin-6A + S-adenosyl-L-homocysteine. Its pathway is cofactor biosynthesis; adenosylcobalamin biosynthesis; cob(II)yrinate a,c-diamide from sirohydrochlorin (anaerobic route): step 6/10. Functionally, catalyzes the methylation of C-1 in cobalt-precorrin-5B to form cobalt-precorrin-6A. This chain is Cobalt-precorrin-5B C(1)-methyltransferase, found in Cyanothece sp. (strain PCC 7425 / ATCC 29141).